Reading from the N-terminus, the 351-residue chain is Xaa-Pro dipeptidase (351 aa).

Residues aspartate 212, aspartate 223, histidine 287, glutamate 316, and glutamate 330 each contribute to the Co(2+) site.

Belongs to the peptidase M24B family. Archaeal-type prolidase subfamily. In terms of assembly, homodimer. It depends on Co(2+) as a cofactor.

Its subcellular location is the cytoplasm. It carries out the reaction Xaa-L-Pro dipeptide + H2O = an L-alpha-amino acid + L-proline. Splits dipeptides with a prolyl in the C-terminal position and a nonpolar amino acid at the N-terminal position. The polypeptide is Xaa-Pro dipeptidase (pepQ) (Pyrococcus horikoshii (strain ATCC 700860 / DSM 12428 / JCM 9974 / NBRC 100139 / OT-3)).